The primary structure comprises 518 residues: MDTSHSDTVLIIDFGSQVTQLIARRVRAMGVYSEIVPFQSALGGINRIKPKAVILSGSPYSTLDNGSPRAPIEVFEAGIPVLGICYGQQVMCVQLGGKVEAGHEREFGRAFLEIKEESALFDGVWEKGSSQQVWMSHGDRVTALPEGFCVIGTSKGAPYAAISDEKRNFYAVQFHPEVVHTPDGEKLLQNFVCKISGIKNNWSMAAYRDQAIAAIREKVGKNRVICGLSGGVDSSVTAVLLHEAIGDQLTCIFVDHGLIRKNEAEEVLKLFRDNYNIELIHVNAADMFINALEGETDPEKKRKTIGRLFIEVFEEETKKIGGAKFLAQGTLYPDVIESVSAIGEAITIKSHHNVGGLPERMNMKLVEPLRELFKDDVRSLGRELGLPEEFIKRHPFPGPGLAIRCPGAVTREKIEILREADAIYLDEIRKAGLYDKIWQAFAILLPVQTVGVMGDGRTYEFVCALRAVTSVDGMTADFYPHDMDFLSRTAARIINEVRGINRVVYDITSKPPGTIEWE.

In terms of domain architecture, Glutamine amidotransferase type-1 spans 8–201 (TVLIIDFGSQ…VCKISGIKNN (194 aa)). The active-site Nucleophile is the Cys-85. Residues His-175 and Glu-177 contribute to the active site. In terms of domain architecture, GMPS ATP-PPase spans 202–393 (WSMAAYRDQA…LGLPEEFIKR (192 aa)). Residue 229–235 (SGGVDSS) coordinates ATP.

As to quaternary structure, homodimer.

The enzyme catalyses XMP + L-glutamine + ATP + H2O = GMP + L-glutamate + AMP + diphosphate + 2 H(+). It participates in purine metabolism; GMP biosynthesis; GMP from XMP (L-Gln route): step 1/1. Catalyzes the synthesis of GMP from XMP. This is GMP synthase [glutamine-hydrolyzing] from Bartonella bacilliformis (strain ATCC 35685 / KC583 / Herrer 020/F12,63).